Reading from the N-terminus, the 245-residue chain is Phosphoribosylaminoimidazole-succinocarboxamide synthase (245 aa).

Belongs to the SAICAR synthetase family.

It carries out the reaction 5-amino-1-(5-phospho-D-ribosyl)imidazole-4-carboxylate + L-aspartate + ATP = (2S)-2-[5-amino-1-(5-phospho-beta-D-ribosyl)imidazole-4-carboxamido]succinate + ADP + phosphate + 2 H(+). It participates in purine metabolism; IMP biosynthesis via de novo pathway; 5-amino-1-(5-phospho-D-ribosyl)imidazole-4-carboxamide from 5-amino-1-(5-phospho-D-ribosyl)imidazole-4-carboxylate: step 1/2. The polypeptide is Phosphoribosylaminoimidazole-succinocarboxamide synthase (Acaryochloris marina (strain MBIC 11017)).